Here is a 139-residue protein sequence, read N- to C-terminus: MAAGSWKATRLLLAILVALVAFSYQVKRKTFIRIEEVSALESSVKETLEYVTDEYNKKSEDLYNFRILRILKIMKQVTGHLEYHITVEMQRTTCLKTETSLCDIQKGELHKKIQCYFSVYAIPWVEVFKILKKNCTDIS.

A signal peptide spans 1–28 (MAAGSWKATRLLLAILVALVAFSYQVKR). 2 disulfides stabilise this stretch: C94/C102 and C115/C135. N134 carries N-linked (GlcNAc...) asparagine glycosylation.

This sequence belongs to the cystatin family. Expressed in epididymis, where it localizes to the proximal caput and also part of the midcaput. Not detected in other tissues tested.

The protein localises to the secreted. Has antibacterial activity against the Gram-negative bacteria E.coli. May play a role in sperm maturation and fertilization. The sequence is that of Cystatin-11 from Mus musculus (Mouse).